We begin with the raw amino-acid sequence, 164 residues long: FMN reductase (NADH) RutF (164 aa).

This sequence belongs to the non-flavoprotein flavin reductase family. RutF subfamily.

It catalyses the reaction FMNH2 + NAD(+) = FMN + NADH + 2 H(+). Functionally, catalyzes the reduction of FMN to FMNH2 which is used to reduce pyrimidine by RutA via the Rut pathway. This Klebsiella variicola (strain At-22) protein is FMN reductase (NADH) RutF.